A 269-amino-acid polypeptide reads, in one-letter code: Tryptophan synthase alpha chain (269 aa).

Catalysis depends on proton acceptor residues glutamate 49 and aspartate 60.

This sequence belongs to the TrpA family. Tetramer of two alpha and two beta chains.

It carries out the reaction (1S,2R)-1-C-(indol-3-yl)glycerol 3-phosphate + L-serine = D-glyceraldehyde 3-phosphate + L-tryptophan + H2O. The protein operates within amino-acid biosynthesis; L-tryptophan biosynthesis; L-tryptophan from chorismate: step 5/5. Its function is as follows. The alpha subunit is responsible for the aldol cleavage of indoleglycerol phosphate to indole and glyceraldehyde 3-phosphate. This Pseudomonas putida (strain W619) protein is Tryptophan synthase alpha chain.